The primary structure comprises 504 residues: Glycerol kinase (504 aa).

ADP is bound at residue Thr16. ATP contacts are provided by Thr16 and Thr17. Thr16 contacts sn-glycerol 3-phosphate. ADP is bound at residue Arg20. Residues Arg86, Glu87, Tyr138, and Asp247 each coordinate sn-glycerol 3-phosphate. Glycerol-binding residues include Arg86, Glu87, Tyr138, Asp247, and Gln248. Residues Thr269 and Gly316 each coordinate ADP. ATP contacts are provided by Thr269, Gly316, Gln320, and Gly417. Residues Gly417 and Asn421 each coordinate ADP.

It belongs to the FGGY kinase family.

The catalysed reaction is glycerol + ATP = sn-glycerol 3-phosphate + ADP + H(+). It functions in the pathway polyol metabolism; glycerol degradation via glycerol kinase pathway; sn-glycerol 3-phosphate from glycerol: step 1/1. With respect to regulation, inhibited by fructose 1,6-bisphosphate (FBP). Key enzyme in the regulation of glycerol uptake and metabolism. Catalyzes the phosphorylation of glycerol to yield sn-glycerol 3-phosphate. The sequence is that of Glycerol kinase from Trichodesmium erythraeum (strain IMS101).